Consider the following 718-residue polypeptide: Catalase-peroxidase (718 aa).

The segment at residues 98–219 (WHAAGTYRMG…LAATEMGLIY (122 aa)) is a cross-link (tryptophyl-tyrosyl-methioninium (Trp-Tyr) (with M-245)). The Proton acceptor role is filled by His99. The segment at residues 219-245 (YVNPEGPQASGDPRSAAPFIRATFGNM) is a cross-link (tryptophyl-tyrosyl-methioninium (Tyr-Met) (with W-98)). Heme b is bound at residue His260.

This sequence belongs to the peroxidase family. Peroxidase/catalase subfamily. As to quaternary structure, homodimer or homotetramer. Requires heme b as cofactor. In terms of processing, formation of the three residue Trp-Tyr-Met cross-link is important for the catalase, but not the peroxidase activity of the enzyme.

The enzyme catalyses H2O2 + AH2 = A + 2 H2O. The catalysed reaction is 2 H2O2 = O2 + 2 H2O. Functionally, bifunctional enzyme with both catalase and broad-spectrum peroxidase activity. The chain is Catalase-peroxidase from Acinetobacter baumannii (strain ACICU).